A 443-amino-acid chain; its full sequence is MVKLSCVIVGVPGDPFQVEIDEICELVAGLKDAIKKEKPDSIKCDADKLQLFKAAKEDRTFSASGAEEEKKDFRWLKAASDDVKKLKHGEKTAAIEAVVRKDQVLRGKETVSDVLMGMESPSISQIHVLVVLPEDSESEGGTSAQPAEKERLLKFLREQAADKKRKRYWHSEMDMDQGWELLDDFDLTVKPVSTVHAEADPADSFNWQSDLVQDGQEVVLTEEQQRGRYREYVERNIGAVLKENKLCVTAVDEGENVLSVDVPKLGIELRGRTDLLVLSDIVEETSDYLMHLPEVKMLIEVKRDAEASDFQALSELIALDILAEDPVMALLTDLNQSWKFFWVSKKSDDSDCICKATIKSPGEAFQVIRALLTASAETKLPCFHQPLKRLKLSQHRGYKNAECLQQYYKVAEVSGPDYELARAVAEHLVRSMPGYCCANESEP.

The first 17 residues, 1 to 17, serve as a signal peptide directing secretion; sequence MVKLSCVIVGVPGDPFQ. The tract at residues 18–56 is LQLFLAK domain; that stretch reads VEIDEICELVAGLKDAIKKEKPDSIKCDADKLQLFKAAK. The interval 57–126 is DWL domain; sequence EDRTFSASGA…GMESPSISQI (70 aa). The HVLVXXP motif motif lies at 127-133; the sequence is HVLVVLP. An effector domain region spans residues 134–439; that stretch reads EDSESEGGTS…RSMPGYCCAN (306 aa). 2 consecutive short sequence motifs (nuclear localization signal) follow at residues 161-170 and 384-393; these read ADKKRKRYWH and HQPLKRLKLS.

The protein belongs to the Crinkler effector family.

Its subcellular location is the secreted. It localises to the host nucleus. Functionally, secreted effector that exhibits strong cell death suppression activity and suppresses cell death induced by a variety of effectors including CRN63, Avh241 and Avr3a. Protects host plants from biotic and abiotic stresses such as salinity and drought by up-regulation of many defense-related genes, including ABC transporters, Cytochrome P450 monooxygenases and receptor-like kinases (RLKs). Also enhances resistance to Phytophtora pathogens. The chain is Crinkler effector protein 161 from Phytophthora sojae (strain P6497) (Soybean stem and root rot agent).